Here is a 592-residue protein sequence, read N- to C-terminus: Methylenetetrahydrofolate reductase (NADH) 1 (592 aa).

Glutamate 21 (proton donor/acceptor) is an active-site residue. Residues glutamate 21–lysine 26 and threonine 52–tryptophan 53 each bind NAD(+). FAD is bound by residues threonine 52–tryptophan 53, histidine 81, arginine 111–aspartate 113, tyrosine 153, histidine 157–valine 160, aspartate 175, and lysine 182. Aspartate 113 contacts substrate. Glutamine 193 and tyrosine 285 together coordinate substrate.

The protein belongs to the methylenetetrahydrofolate reductase family. As to quaternary structure, homodimer. Requires FAD as cofactor.

The enzyme catalyses (6S)-5-methyl-5,6,7,8-tetrahydrofolate + NAD(+) = (6R)-5,10-methylene-5,6,7,8-tetrahydrofolate + NADH + H(+). Its pathway is one-carbon metabolism; tetrahydrofolate interconversion. With respect to regulation, plant MTHFRs strongly prefer NADH over NADPH. Not inhibited by methionine or S-adenosylmethionine. The probable reversibility of the MTHFR reaction in plants suggests that they can metabolize the methyl group of 5,10-methylenetetrahydrofolate to serine, sugars and starch. The protein is Methylenetetrahydrofolate reductase (NADH) 1 (MTHFR1) of Arabidopsis thaliana (Mouse-ear cress).